A 483-amino-acid chain; its full sequence is Cysteine proteinase 1, mitochondrial (483 aa).

The N-terminal 30 residues, Met-1–Met-30, are a transit peptide targeting the mitochondrion. Residues Cys-102, His-398, and Asn-421 contribute to the active site. A propeptide (removed in mature form; by autocatalysis) is located at residue Lys-483.

Belongs to the peptidase C1 family. In terms of assembly, homohexamer. Binds to nucleic acids. Binds single-stranded DNA and RNA with higher affinity than double-stranded DNA. In terms of processing, the N-terminus of isoform Cytoplasmic is blocked.

The protein resides in the mitochondrion. Its subcellular location is the cytoplasm. The enzyme catalyses Inactivates bleomycin B2 (a cytotoxic glycometallopeptide) by hydrolysis of a carboxyamide bond of beta-aminoalanine, but also shows general aminopeptidase activity. The specificity varies somewhat with source, but amino acid arylamides of Met, Leu and Ala are preferred.. Its activity is regulated as follows. Inhibited by E64, a specific inhibitor of cysteine proteases, N-ethylmaleimide, iodacetamide, and mercury and zinc ions. The normal physiological role of the enzyme is unknown, but it is not essential for the viability of yeast cells. Has aminopeptidase activity, shortening substrate peptides sequentially by 1 amino acid. Has bleomycin hydrolase activity, which can protect the cell from the toxic effects of bleomycin. Has homocysteine-thiolactonase activity, protecting the cell against homocysteine toxicity. Acts as a repressor in the GAL4 regulatory system, but this does not require either the peptidase or nucleic acid-binding activities. This Saccharomyces cerevisiae (strain YJM789) (Baker's yeast) protein is Cysteine proteinase 1, mitochondrial (LAP3).